Reading from the N-terminus, the 304-residue chain is Bifunctional phosphoglucose/phosphomannose isomerase (304 aa).

One can recognise an SIS domain in the interval 16-147 (FDKSFKVGKY…KPKIGDVDEA (132 aa)). Residues Gly-35, Ser-36, Ser-74, Ser-76, Thr-79, and Arg-122 each coordinate D-fructose 6-phosphate. Residue Glu-196 is the Proton acceptor of the active site. Residues His-212 and Lys-300 each contribute to the D-fructose 6-phosphate site. His-212 (proton donor) is an active-site residue. The Proton acceptor role is filled by Lys-300.

The protein belongs to the PGI/PMI family. Homodimer.

The catalysed reaction is alpha-D-glucose 6-phosphate = beta-D-fructose 6-phosphate. It carries out the reaction D-mannose 6-phosphate = D-fructose 6-phosphate. Functionally, dual specificity isomerase that catalyzes the isomerization of both glucose-6-phosphate and mannose-6-phosphate to fructose-6-phosphate. The chain is Bifunctional phosphoglucose/phosphomannose isomerase from Thermoplasma volcanium (strain ATCC 51530 / DSM 4299 / JCM 9571 / NBRC 15438 / GSS1).